A 180-amino-acid chain; its full sequence is Large ribosomal subunit protein uL5 (180 aa).

The protein belongs to the universal ribosomal protein uL5 family. In terms of assembly, part of the 50S ribosomal subunit; part of the 5S rRNA/L5/L18/L25 subcomplex. Contacts the 5S rRNA and the P site tRNA. Forms a bridge to the 30S subunit in the 70S ribosome.

In terms of biological role, this is one of the proteins that bind and probably mediate the attachment of the 5S RNA into the large ribosomal subunit, where it forms part of the central protuberance. In the 70S ribosome it contacts protein S13 of the 30S subunit (bridge B1b), connecting the 2 subunits; this bridge is implicated in subunit movement. Contacts the P site tRNA; the 5S rRNA and some of its associated proteins might help stabilize positioning of ribosome-bound tRNAs. The chain is Large ribosomal subunit protein uL5 from Roseiflexus castenholzii (strain DSM 13941 / HLO8).